Reading from the N-terminus, the 141-residue chain is Suppressor of RNA silencing (141 aa).

2 short sequence motifs (bipartite nuclear localization signal) span residues 75–91 and 111–128; these read RKRV…QIRR and KKKF…RFLR. Positions 94 to 117 are disordered; the sequence is AENMSATAKKSHNSKTSKKKFKED. Positions 102–113 are enriched in basic residues; sequence KKSHNSKTSKKK.

The protein resides in the host cytoplasm. The protein localises to the host nucleus. Its function is as follows. Weak suppressor of RNA-mediated gene silencing, also known as post-transcriptional gene silencing (PTGS), a mechanism of plant viral defense that performs sequence-specific inhibition of viral mRNAs expression. This could be used by the virus to infect efficiently the host the meristem cells. The polypeptide is Suppressor of RNA silencing (Tobacco rattle virus (isolate PpK20) (TRV)).